A 98-amino-acid polypeptide reads, in one-letter code: Large ribosomal subunit protein uL23 (98 aa).

The protein belongs to the universal ribosomal protein uL23 family. In terms of assembly, part of the 50S ribosomal subunit. Contacts protein L29, and trigger factor when it is bound to the ribosome.

One of the early assembly proteins it binds 23S rRNA. One of the proteins that surrounds the polypeptide exit tunnel on the outside of the ribosome. Forms the main docking site for trigger factor binding to the ribosome. The protein is Large ribosomal subunit protein uL23 of Halorhodospira halophila (strain DSM 244 / SL1) (Ectothiorhodospira halophila (strain DSM 244 / SL1)).